The primary structure comprises 333 residues: Glycerol-3-phosphate dehydrogenase [NAD(P)+] (333 aa).

NADPH is bound by residues Ser-10, Trp-11, His-31, Arg-32, and Lys-105. Sn-glycerol 3-phosphate is bound by residues Lys-105, Gly-136, and Ser-138. Ala-140 is an NADPH binding site. Sn-glycerol 3-phosphate contacts are provided by Lys-191, Asp-244, Ser-254, Arg-255, and Asn-256. The active-site Proton acceptor is Lys-191. NADPH is bound at residue Arg-255. NADPH-binding residues include Ile-279 and Glu-281.

This sequence belongs to the NAD-dependent glycerol-3-phosphate dehydrogenase family.

The protein localises to the cytoplasm. It carries out the reaction sn-glycerol 3-phosphate + NAD(+) = dihydroxyacetone phosphate + NADH + H(+). The catalysed reaction is sn-glycerol 3-phosphate + NADP(+) = dihydroxyacetone phosphate + NADPH + H(+). It functions in the pathway membrane lipid metabolism; glycerophospholipid metabolism. Catalyzes the reduction of the glycolytic intermediate dihydroxyacetone phosphate (DHAP) to sn-glycerol 3-phosphate (G3P), the key precursor for phospholipid synthesis. The chain is Glycerol-3-phosphate dehydrogenase [NAD(P)+] from Chlorobium chlorochromatii (strain CaD3).